A 67-amino-acid polypeptide reads, in one-letter code: Conotoxin LeDr192 (67 aa).

The N-terminal stretch at 1–19 (MRCFPVFIILLLLIASAPC) is a signal peptide. Residues 20 to 49 (FDARTKTDDDVPLSPLRDNLKRTIRTRLNI) constitute a propeptide that is removed on maturation. Threonine 65 carries the post-translational modification Threonine amide.

The protein belongs to the conotoxin T superfamily. In terms of processing, contains 2 disulfide bonds that can be either 'C1-C3, C2-C4' or 'C1-C4, C2-C3', since these disulfide connectivities have been observed for conotoxins with cysteine framework V (for examples, see AC P0DQQ7 and AC P81755). In terms of tissue distribution, expressed by the venom duct.

It localises to the secreted. The protein is Conotoxin LeDr192 of Conus litteratus (Lettered cone).